The chain runs to 201 residues: Pyridoxal 5'-phosphate synthase subunit PdxT (201 aa).

49-51 (GES) provides a ligand contact to L-glutamine. Cys-81 functions as the Nucleophile in the catalytic mechanism. Residues Arg-110 and 139–140 (IR) contribute to the L-glutamine site. Residues His-175 and Glu-177 each act as charge relay system in the active site.

It belongs to the glutaminase PdxT/SNO family. In terms of assembly, in the presence of PdxS, forms a dodecamer of heterodimers. Only shows activity in the heterodimer.

It carries out the reaction aldehydo-D-ribose 5-phosphate + D-glyceraldehyde 3-phosphate + L-glutamine = pyridoxal 5'-phosphate + L-glutamate + phosphate + 3 H2O + H(+). The catalysed reaction is L-glutamine + H2O = L-glutamate + NH4(+). The protein operates within cofactor biosynthesis; pyridoxal 5'-phosphate biosynthesis. Functionally, catalyzes the hydrolysis of glutamine to glutamate and ammonia as part of the biosynthesis of pyridoxal 5'-phosphate. The resulting ammonia molecule is channeled to the active site of PdxS. This chain is Pyridoxal 5'-phosphate synthase subunit PdxT, found in Streptomyces avermitilis (strain ATCC 31267 / DSM 46492 / JCM 5070 / NBRC 14893 / NCIMB 12804 / NRRL 8165 / MA-4680).